The sequence spans 364 residues: Carbamoyl phosphate synthase pyrimidine-specific small chain (364 aa).

The CPSase stretch occupies residues 1–171 (MKRRLVLENG…AYPSPGRGKR (171 aa)). L-glutamine contacts are provided by S45, G219, and G221. A Glutamine amidotransferase type-1 domain is found at 171–356 (RIVLVDFGMK…IEMIETTEKE (186 aa)). The Nucleophile role is filled by C246. L-glutamine-binding residues include L247, Q250, N288, G290, and Y291. Residues H329 and E331 contribute to the active site.

This sequence belongs to the CarA family. In terms of assembly, composed of two chains; the small (or glutamine) chain promotes the hydrolysis of glutamine to ammonia, which is used by the large (or ammonia) chain to synthesize carbamoyl phosphate. Tetramer of heterodimers (alpha,beta)4. Interacts with BrxC.

It catalyses the reaction hydrogencarbonate + L-glutamine + 2 ATP + H2O = carbamoyl phosphate + L-glutamate + 2 ADP + phosphate + 2 H(+). The enzyme catalyses L-glutamine + H2O = L-glutamate + NH4(+). The protein operates within pyrimidine metabolism; UMP biosynthesis via de novo pathway; (S)-dihydroorotate from bicarbonate: step 1/3. Small subunit of the glutamine-dependent carbamoyl phosphate synthetase (CPSase). CPSase catalyzes the formation of carbamoyl phosphate from the ammonia moiety of glutamine, carbonate, and phosphate donated by ATP, constituting the first step of the biosynthetic pathway leading to arginine and/or urea. The small subunit (glutamine amidotransferase) binds and cleaves glutamine to supply the large subunit with the substrate ammonia. The chain is Carbamoyl phosphate synthase pyrimidine-specific small chain from Bacillus subtilis (strain 168).